A 209-amino-acid polypeptide reads, in one-letter code: Chaperone protein TorD (209 aa).

Belongs to the TorD/DmsD family. TorD subfamily.

Its subcellular location is the cytoplasm. Functionally, involved in the biogenesis of TorA. Acts on TorA before the insertion of the molybdenum cofactor and, as a result, probably favors a conformation of the apoenzyme that is competent for acquiring the cofactor. This chain is Chaperone protein TorD, found in Shewanella baltica (strain OS185).